A 311-amino-acid chain; its full sequence is 4-hydroxy-tetrahydrodipicolinate synthase (311 aa).

Thr-51 contributes to the pyruvate binding site. Residue Tyr-140 is the Proton donor/acceptor of the active site. The active-site Schiff-base intermediate with substrate is Lys-168. A pyruvate-binding site is contributed by Ile-209.

Belongs to the DapA family. As to quaternary structure, homotetramer; dimer of dimers.

The protein localises to the cytoplasm. The catalysed reaction is L-aspartate 4-semialdehyde + pyruvate = (2S,4S)-4-hydroxy-2,3,4,5-tetrahydrodipicolinate + H2O + H(+). Its pathway is amino-acid biosynthesis; L-lysine biosynthesis via DAP pathway; (S)-tetrahydrodipicolinate from L-aspartate: step 3/4. Catalyzes the condensation of (S)-aspartate-beta-semialdehyde [(S)-ASA] and pyruvate to 4-hydroxy-tetrahydrodipicolinate (HTPA). In Streptococcus pneumoniae (strain ATCC BAA-255 / R6), this protein is 4-hydroxy-tetrahydrodipicolinate synthase.